The chain runs to 191 residues: Ubiquinol-cytochrome c reductase iron-sulfur subunit (191 aa).

Residues 18–35 (ATAATGVVVTGAAVWPLI) traverse the membrane as a helical segment. Residues 94 to 189 (RDTSAENANK…AAFVDETTIK (96 aa)) form the Rieske domain. The segment at 95 to 116 (DTSAENANKPGAEATDENRTLP) is disordered. [2Fe-2S] cluster contacts are provided by Cys133, His135, Cys153, and His156. A disulfide bridge connects residues Cys138 and Cys155.

The protein belongs to the Rieske iron-sulfur protein family. As to quaternary structure, the main subunits of complex b-c1 are: cytochrome b, cytochrome c1 and the Rieske protein. [2Fe-2S] cluster is required as a cofactor.

The protein resides in the cell membrane. It catalyses the reaction a quinol + 2 Fe(III)-[cytochrome c](out) = a quinone + 2 Fe(II)-[cytochrome c](out) + 2 H(+)(out). Its function is as follows. Component of the ubiquinol-cytochrome c reductase complex (complex III or cytochrome b-c1 complex), which is a respiratory chain that generates an electrochemical potential coupled to ATP synthesis. The sequence is that of Ubiquinol-cytochrome c reductase iron-sulfur subunit (petA) from Rhodobacter capsulatus (strain ATCC BAA-309 / NBRC 16581 / SB1003).